A 481-amino-acid chain; its full sequence is Glutamate--tRNA ligase (481 aa).

The 'HIGH' region signature appears at 10–20 (PSPTGHLHIGN). The short motif at 251 to 255 (KLSKR) is the 'KMSKS' region element. Residue lysine 254 coordinates ATP.

The protein belongs to the class-I aminoacyl-tRNA synthetase family. Glutamate--tRNA ligase type 1 subfamily. In terms of assembly, monomer.

The protein resides in the cytoplasm. It carries out the reaction tRNA(Glu) + L-glutamate + ATP = L-glutamyl-tRNA(Glu) + AMP + diphosphate. Its function is as follows. Catalyzes the attachment of glutamate to tRNA(Glu) in a two-step reaction: glutamate is first activated by ATP to form Glu-AMP and then transferred to the acceptor end of tRNA(Glu). This chain is Glutamate--tRNA ligase, found in Exiguobacterium sibiricum (strain DSM 17290 / CCUG 55495 / CIP 109462 / JCM 13490 / 255-15).